Reading from the N-terminus, the 178-residue chain is UPF0228 protein MM_0401 (178 aa).

It belongs to the UPF0228 family.

The sequence is that of UPF0228 protein MM_0401 from Methanosarcina mazei (strain ATCC BAA-159 / DSM 3647 / Goe1 / Go1 / JCM 11833 / OCM 88) (Methanosarcina frisia).